We begin with the raw amino-acid sequence, 70 residues long: U2-agatoxin-Ao1n (70 aa).

A signal peptide spans 1 to 20 (MRAIISLLLISAMVFYIIAA). A propeptide spanning residues 21-34 (VPEEEGLQLSEDER) is cleaved from the precursor. Cystine bridges form between Cys37-Cys53, Cys44-Cys58, and Cys52-Cys68. Position 69 is a leucine amide (Leu69).

This sequence belongs to the neurotoxin 01 (U2-agtx) family. Expressed by the venom gland.

It is found in the secreted. In terms of biological role, insect active toxin causing rapid but reversible paralysis in crickets. No activity shown in mammals. Does not show effect on mammalian voltage-gated calcium channels. This Agelena orientalis (Funnel-web spider) protein is U2-agatoxin-Ao1n.